A 275-amino-acid polypeptide reads, in one-letter code: L-aspartate dehydrogenase (275 aa).

A130 and N196 together coordinate NAD(+). Residue H226 is part of the active site.

Belongs to the L-aspartate dehydrogenase family.

The enzyme catalyses L-aspartate + NADP(+) + H2O = oxaloacetate + NH4(+) + NADPH + H(+). The catalysed reaction is L-aspartate + NAD(+) + H2O = oxaloacetate + NH4(+) + NADH + H(+). It functions in the pathway cofactor biosynthesis; NAD(+) biosynthesis; iminoaspartate from L-aspartate (dehydrogenase route): step 1/1. In terms of biological role, specifically catalyzes the NAD or NADP-dependent dehydrogenation of L-aspartate to iminoaspartate. This chain is L-aspartate dehydrogenase, found in Ruegeria pomeroyi (strain ATCC 700808 / DSM 15171 / DSS-3) (Silicibacter pomeroyi).